The primary structure comprises 237 residues: MLTTWLTEAKKIVIFTGAGMSTESGVPDFRSSRGLWQGKNPEALASVDAMDHNREAFIDFYRMRIEGLQGVRPHKGYDVLAAWEKELPITSIITQNTDGLHEQAGSEVVLPLHGSIQRLYCVACGQRYDVARYITNEPYCSCGGFIRPAVVLFGEMLNTDTLALAERHTKEADLFLVLGSSLVVSPANLFPKIAKECGAKLVIVNHDETPLDPLADLVIQDQSIGTFLEETNRALQA.

Residues 1–237 form the Deacetylase sirtuin-type domain; it reads MLTTWLTEAK…LEETNRALQA (237 aa). 7 residues coordinate NAD(+): A18, T22, F29, R30, Q95, D98, and H113. F29 provides a ligand contact to nicotinamide. Residue D98 participates in nicotinamide binding. H113 serves as the catalytic Proton acceptor. Zn(2+) is bound by residues C121, C124, C140, and C142. The NAD(+) site is built by S180, S181, N205, and I224.

Belongs to the sirtuin family. Class U subfamily. The cofactor is Zn(2+).

The protein resides in the cytoplasm. It carries out the reaction N(6)-acetyl-L-lysyl-[protein] + NAD(+) + H2O = 2''-O-acetyl-ADP-D-ribose + nicotinamide + L-lysyl-[protein]. Its function is as follows. NAD-dependent protein deacetylase which modulates the activities of several enzymes which are inactive in their acetylated form. The sequence is that of NAD-dependent protein deacetylase from Halalkalibacterium halodurans (strain ATCC BAA-125 / DSM 18197 / FERM 7344 / JCM 9153 / C-125) (Bacillus halodurans).